The following is a 212-amino-acid chain: MKAFTTLQGLVCPLDRANVDTDAIIPKQFLKSIKRSGFGPNLFDEWRYLDHGEPGMDNAKRPLNPDFVLNQPRYQGAQVLLARENFGCGSSREHAPWALDDQGFRVVIAPSFADIFFNNCYKNGLLPIVLAADIVDQLFQECEAAPGYSLKVDLAAQTVFTPSGQAFLFDITEHRKHCLLGGLDEIGLTLQHADEIKAFEARRRVEQPWLFA.

It belongs to the LeuD family. LeuD type 1 subfamily. As to quaternary structure, heterodimer of LeuC and LeuD.

It catalyses the reaction (2R,3S)-3-isopropylmalate = (2S)-2-isopropylmalate. The protein operates within amino-acid biosynthesis; L-leucine biosynthesis; L-leucine from 3-methyl-2-oxobutanoate: step 2/4. Functionally, catalyzes the isomerization between 2-isopropylmalate and 3-isopropylmalate, via the formation of 2-isopropylmaleate. This is 3-isopropylmalate dehydratase small subunit 2 from Chromobacterium violaceum (strain ATCC 12472 / DSM 30191 / JCM 1249 / CCUG 213 / NBRC 12614 / NCIMB 9131 / NCTC 9757 / MK).